Reading from the N-terminus, the 243-residue chain is Exosome complex component Rrp41 (243 aa).

This sequence belongs to the RNase PH family. Rrp41 subfamily. In terms of assembly, component of the archaeal exosome complex. Forms a hexameric ring-like arrangement composed of 3 Rrp41-Rrp42 heterodimers. The hexameric ring associates with a trimer of Rrp4 and/or Csl4 subunits.

It is found in the cytoplasm. In terms of biological role, catalytic component of the exosome, which is a complex involved in RNA degradation. Has 3'-&gt;5' exoribonuclease activity. Can also synthesize heteromeric RNA-tails. This Sulfolobus acidocaldarius (strain ATCC 33909 / DSM 639 / JCM 8929 / NBRC 15157 / NCIMB 11770) protein is Exosome complex component Rrp41.